A 526-amino-acid polypeptide reads, in one-letter code: GMP synthase [glutamine-hydrolyzing] (526 aa).

The region spanning 8-208 (CILIIDFGSQ…AVDICRCEVT (201 aa)) is the Glutamine amidotransferase type-1 domain. C85 functions as the Nucleophile in the catalytic mechanism. Residues H182 and E184 contribute to the active site. A GMPS ATP-PPase domain is found at 209–401 (WKPVYIVKNI…LGLPLNVVNQ (193 aa)). ATP is bound at residue 236-242 (SGGIDSL).

Homodimer.

It carries out the reaction XMP + L-glutamine + ATP + H2O = GMP + L-glutamate + AMP + diphosphate + 2 H(+). It functions in the pathway purine metabolism; GMP biosynthesis; GMP from XMP (L-Gln route): step 1/1. Catalyzes the synthesis of GMP from XMP. In Blochmanniella floridana, this protein is GMP synthase [glutamine-hydrolyzing].